Consider the following 841-residue polypeptide: MSDNEIKNEAPKKLSLQRRTKTTVADGKVQVEVRKSRKIDTAAVKKAQEEAALKAKQEAEAKAQAEKTAAEQAKAEAEAAKKAEGAKVEATKKSAPAVPVMPNSKPKAAAPKAEQPKQEKALDPEKEAKKKEEAELRRKQEELARQKAEMEAKRAAENARRLAEIAREEAAENGEEFEDDRFTSSYAREADRDNDRRSEANRGRGKGGVNKAKKGDREDKNERNADRRNQKDVKGKGKNAKKGSALQQAFTKPVQVNKADVVIGETITVAELANKMAVKATEIIKTMMKMGEMVTINQVIDQETAQLVAEEMGHKVILRNENELEDAVMEDRDVDAEKVTRAPVVTIMGHVDHGKTSLLDYIRKAKVAAGEAGGITQHIGAYHVETEDGKMITFLDTPGHAAFTSMRARGAKATDIVVLVVAADDGVMPQTIEAIQHARAAGAPIVVAVNKIDKPEANPDRVEQELLQHEVVSEKFGGDVQFVPVSAKKGLGIDDLLEAILLQSEVLELTAVKEGMASGVVIESYLDKGRGPVATILVQSGTLNKGDIVLCGFEYGRVRAMRDENGKEVDSAGPSIPVEVLGLSGVPAAGDEATVVRDEKKAREVALFRQGKFREVKLARQQKAKLENMFSNMTAGDVAELNVIVKADVQGSVEAICQSLAELSTDEVKVKVVGSGVGGITETDATLAAASNAIMVGFNVRADASARRVIEAENIDLRYYSIIYELLNEIKAAMSGMLQPEFKQEIIGLAEVRDVFRHPKFGAIAGCMVTEGVVKRNNPIRVLRDNVVIFEGELESLRRFKDDVSEVRNGMECGIGVKNYNDVKVGDQIEVFEVVEVKRSI.

5 stretches are compositionally biased toward basic and acidic residues: residues 1–12, 52–92, 114–170, 188–202, and 213–235; these read MSDNEIKNEAPK, ALKA…EATK, EQPK…REEA, READRDNDRRSEANR, and KKGDREDKNERNADRRNQKDVKG. 2 disordered regions span residues 1-24 and 52-246; these read MSDNEIKNEAPKKLSLQRRTKTTV and ALKA…GSAL. The tr-type G domain occupies 340–510; the sequence is TRAPVVTIMG…LLQSEVLELT (171 aa). Positions 349 to 356 are G1; it reads GHVDHGKT. 349 to 356 lines the GTP pocket; it reads GHVDHGKT. The G2 stretch occupies residues 374–378; that stretch reads GITQH. Residues 396–399 form a G3 region; the sequence is DTPG. GTP contacts are provided by residues 396-400 and 450-453; these read DTPGH and NKID. The segment at 450–453 is G4; the sequence is NKID. The segment at 486 to 488 is G5; the sequence is SAK.

The protein belongs to the TRAFAC class translation factor GTPase superfamily. Classic translation factor GTPase family. IF-2 subfamily.

It localises to the cytoplasm. In terms of biological role, one of the essential components for the initiation of protein synthesis. Protects formylmethionyl-tRNA from spontaneous hydrolysis and promotes its binding to the 30S ribosomal subunits. Also involved in the hydrolysis of GTP during the formation of the 70S ribosomal complex. This Actinobacillus pleuropneumoniae serotype 5b (strain L20) protein is Translation initiation factor IF-2.